The following is a 393-amino-acid chain: Staphopain B (393 aa).

The first 36 residues, 1–36 (MNSSCKTRVFNIISIIMVSMLILSLGAFANNNKAKA), serve as a signal peptide directing secretion. A propeptide spanning residues 37–219 (DSHSKQLEIN…KVEENEAIQE (183 aa)) is cleaved from the precursor. Catalysis depends on residues C243, H340, and N360.

The protein belongs to the peptidase C47 family. In terms of assembly, in the cytoplasm, prematurely activated/folded SspB forms a stable non-covalent complex with SspC. In terms of processing, proteolytically cleaved by staphylococcal serine protease (SspA).

The protein resides in the secreted. Its activity is regulated as follows. Prematurely activated/folded staphopain B is inhibited by staphostatin B (SspC), which is probably required to protect staphylococcal cytoplasmic proteins from degradation by SspB. Its function is as follows. Cysteine protease that plays an important role in the inhibition of host innate immune response. Degrades host elastin, fibrogen, fibronectin and kininogen. Blocks phagocytosis of opsonised S.aureus by neutrophils and monocytes by inducing their death in a proteolytic activity-dependent manner. Decreases surface expression of the 'don't eat me' signal CD31 on neutrophils. Cleaves host galectin-3/LGALS3, thereby inhibiting the neutrophil-activating ability of the lectin. This Staphylococcus aureus protein is Staphopain B (sspB).